The chain runs to 122 residues: Large ribosomal subunit protein uL18 (122 aa).

This sequence belongs to the universal ribosomal protein uL18 family. In terms of assembly, part of the 50S ribosomal subunit; part of the 5S rRNA/L5/L18/L25 subcomplex. Contacts the 5S and 23S rRNAs.

In terms of biological role, this is one of the proteins that bind and probably mediate the attachment of the 5S RNA into the large ribosomal subunit, where it forms part of the central protuberance. This chain is Large ribosomal subunit protein uL18, found in Trichlorobacter lovleyi (strain ATCC BAA-1151 / DSM 17278 / SZ) (Geobacter lovleyi).